An 89-amino-acid chain; its full sequence is FXYD domain-containing ion transport regulator 4 (89 aa).

The signal sequence occupies residues 1-20; sequence MERVTLALLLLAGLTALEAN. The Extracellular segment spans residues 21-38; it reads DPFANKDDPFYYDWKNLQ. Residues 39-59 form a helical membrane-spanning segment; the sequence is LSGLICGGLLAIAGIAAVLSG. At 60-89 the chain is on the cytoplasmic side; sequence KCKCKSSQKQHSPVPEKAIPLITPGSATTC.

It belongs to the FXYD family. Regulatory subunit of the sodium/potassium-transporting ATPase which is composed of a catalytic alpha subunit, a non-catalytic beta subunit and a regulatory subunit. The regulatory subunit, a member of the FXYD protein family, modulates the enzymatic activity in a tissue- and isoform-specific way by changing affinities of the Na+/K+-ATPase toward Na(+), K(+) or ATP.

Its subcellular location is the cell membrane. The protein localises to the basolateral cell membrane. Functionally, associates with and regulates the activity of the sodium/potassium-transporting ATPase (NKA) which catalyzes the hydrolysis of ATP coupled with the exchange of Na(+) and K(+) ions across the plasma membrane. Increases the apparent affinity of the transporter for Na(+) and increases NKA activity. In Homo sapiens (Human), this protein is FXYD domain-containing ion transport regulator 4 (FXYD4).